The following is an 89-amino-acid chain: Small ribosomal subunit protein uS15 (89 aa).

It belongs to the universal ribosomal protein uS15 family. As to quaternary structure, part of the 30S ribosomal subunit. Forms a bridge to the 50S subunit in the 70S ribosome, contacting the 23S rRNA.

In terms of biological role, one of the primary rRNA binding proteins, it binds directly to 16S rRNA where it helps nucleate assembly of the platform of the 30S subunit by binding and bridging several RNA helices of the 16S rRNA. Functionally, forms an intersubunit bridge (bridge B4) with the 23S rRNA of the 50S subunit in the ribosome. The chain is Small ribosomal subunit protein uS15 from Chlamydia caviae (strain ATCC VR-813 / DSM 19441 / 03DC25 / GPIC) (Chlamydophila caviae).